The sequence spans 404 residues: Glucosyl-3-phosphoglycerate synthase (404 aa).

Asp146 is an a divalent metal cation binding site. Residue 188–190 (GRV) coordinates (2R)-3-phosphoglycerate. His270 is an a divalent metal cation binding site.

It belongs to the glycosyltransferase 2 family. The cofactor is Mn(2+). Co(2+) is required as a cofactor. It depends on Mg(2+) as a cofactor.

It catalyses the reaction an NDP-alpha-D-glucose + (2R)-3-phosphoglycerate = (2R)-2-O-(alpha-D-glucopyranosyl)-3-phospho-glycerate + a ribonucleoside 5'-diphosphate + H(+). In terms of biological role, involved in the biosynthesis of 6-O-methylglucose lipopolysaccarides (MGLPs). Catalyzes the transfer of a glucose (Glc) moiety from uridine diphosphate (UDP-Glc) to the position 2 of 3-phospho-D-glycerate (3-PGA) to form glucosyl-3-phosphoglycerate (GPG). This chain is Glucosyl-3-phosphoglycerate synthase, found in Methanococcoides burtonii (strain DSM 6242 / NBRC 107633 / OCM 468 / ACE-M).